We begin with the raw amino-acid sequence, 311 residues long: Splicing factor spf30 (311 aa).

Positions 76–139 constitute a Tudor domain; it reads DFTPGNLVMA…KAMPEEKRQE (64 aa). Disordered stretches follow at residues 154–183 and 276–311; these read RSTPVREPTKAISVASMSTSPSNYASRASS and STEDFPGRTNPKNFGNVARSGHREKHIYNYREDEDS. The span at 168–183 shows a compositional bias: polar residues; sequence ASMSTSPSNYASRASS. Position 173 is a phosphoserine (Ser173). The segment covering 301–311 has biased composition (basic and acidic residues); the sequence is HIYNYREDEDS.

Belongs to the SMN family. As to quaternary structure, associates with spliceosomes.

The protein resides in the nucleus. Its function is as follows. Involved in spliceosome assembly. This is Splicing factor spf30 (spf30) from Schizosaccharomyces pombe (strain 972 / ATCC 24843) (Fission yeast).